The sequence spans 370 residues: tRNA N6-adenosine threonylcarbamoyltransferase (370 aa).

Fe cation is bound by residues histidine 122 and histidine 126. Substrate-binding positions include 153-157, aspartate 186, glycine 199, and asparagine 298; that span reads LLSGG. A Fe cation-binding site is contributed by aspartate 326.

This sequence belongs to the KAE1 / TsaD family. It depends on Fe(2+) as a cofactor.

Its subcellular location is the cytoplasm. It catalyses the reaction L-threonylcarbamoyladenylate + adenosine(37) in tRNA = N(6)-L-threonylcarbamoyladenosine(37) in tRNA + AMP + H(+). Required for the formation of a threonylcarbamoyl group on adenosine at position 37 (t(6)A37) in tRNAs that read codons beginning with adenine. Is involved in the transfer of the threonylcarbamoyl moiety of threonylcarbamoyl-AMP (TC-AMP) to the N6 group of A37, together with TsaE and TsaB. TsaD likely plays a direct catalytic role in this reaction. The chain is tRNA N6-adenosine threonylcarbamoyltransferase from Granulibacter bethesdensis (strain ATCC BAA-1260 / CGDNIH1).